The primary structure comprises 324 residues: Lignin-forming anionic peroxidase (324 aa).

An N-terminal signal peptide occupies residues 1-22 (MSFLRFVGAILFLVAIFGASNA). The residue at position 23 (Gln-23) is a Pyrrolidone carboxylic acid. Disulfide bonds link Cys-33–Cys-111, Cys-66–Cys-71, Cys-117–Cys-320, and Cys-196–Cys-228. Residue Asn-35 is glycosylated (N-linked (GlcNAc...) asparagine). The active-site Proton acceptor is His-64. Residues Asp-65, Val-68, Gly-70, Asp-72, and Ser-74 each contribute to the Ca(2+) site. Residue Asn-150 is glycosylated (N-linked (GlcNAc...) asparagine). Substrate is bound at residue Pro-159. His-189 serves as a coordination point for heme b. Thr-190 contacts Ca(2+). A glycan (N-linked (GlcNAc...) asparagine) is linked at Asn-207. Ca(2+)-binding residues include Asp-242, Thr-245, and Asp-250.

It belongs to the peroxidase family. Classical plant (class III) peroxidase subfamily. It depends on Ca(2+) as a cofactor. The cofactor is heme b.

The protein localises to the secreted. It catalyses the reaction 2 a phenolic donor + H2O2 = 2 a phenolic radical donor + 2 H2O. Functionally, removal of H(2)O(2), oxidation of toxic reductants, biosynthesis and degradation of lignin, suberization, auxin catabolism, response to environmental stresses such as wounding, pathogen attack and oxidative stress. These functions might be dependent on each isozyme/isoform in each plant tissue. In terms of biological role, plays an integral role in secondary cell wall biosynthesis by the polymerization of cinnamyl alcohols into lignin and by forming rigid cross-links between cellulose, pectin, hydroxy-proline-rich glycoproteins, and lignin. This Nicotiana tabacum (Common tobacco) protein is Lignin-forming anionic peroxidase.